Here is a 423-residue protein sequence, read N- to C-terminus: Aspartate aminotransferase, mitochondrial (423 aa).

The transit peptide at 1–22 directs the protein to the mitochondrion; the sequence is MALLQSRLLLSAPRRAAATARA. Residues Gly-58, Trp-155, and Asn-208 each coordinate substrate. Lys-272 is modified (N6-(pyridoxal phosphate)lysine). Arg-400 contacts substrate.

This sequence belongs to the class-I pyridoxal-phosphate-dependent aminotransferase family. As to quaternary structure, homodimer. Pyridoxal 5'-phosphate serves as cofactor. In terms of tissue distribution, detected in heart (at protein level).

The protein resides in the mitochondrion matrix. The enzyme catalyses L-aspartate + 2-oxoglutarate = oxaloacetate + L-glutamate. The catalysed reaction is L-kynurenine + 2-oxoglutarate = kynurenate + L-glutamate + H2O. Its function is as follows. Catalyzes the irreversible transamination of the L-tryptophan metabolite L-kynurenine to form kynurenic acid (KA). As a member of the malate-aspartate shuttle, it has a key role in the intracellular NAD(H) redox balance. Is important for metabolite exchange between mitochondria and cytosol, and for amino acid metabolism. This chain is Aspartate aminotransferase, mitochondrial (GOT2), found in Gallus gallus (Chicken).